Reading from the N-terminus, the 398-residue chain is Phytoene synthase, chloroplastic (398 aa).

It belongs to the phytoene/squalene synthase family. Monomer.

It is found in the plastid. The protein resides in the chloroplast. The enzyme catalyses 2 (2E,6E,10E)-geranylgeranyl diphosphate = 15-cis-phytoene + 2 diphosphate. The protein operates within carotenoid biosynthesis; phytoene biosynthesis; all-trans-phytoene from geranylgeranyl diphosphate: step 1/1. Catalyzes the reaction from prephytoene diphosphate to phytoene. The protein is Phytoene synthase, chloroplastic (PSY) of Daucus carota (Wild carrot).